A 236-amino-acid chain; its full sequence is Leucyl/phenylalanyl-tRNA--protein transferase (236 aa).

Belongs to the L/F-transferase family.

Its subcellular location is the cytoplasm. It catalyses the reaction N-terminal L-lysyl-[protein] + L-leucyl-tRNA(Leu) = N-terminal L-leucyl-L-lysyl-[protein] + tRNA(Leu) + H(+). It carries out the reaction N-terminal L-arginyl-[protein] + L-leucyl-tRNA(Leu) = N-terminal L-leucyl-L-arginyl-[protein] + tRNA(Leu) + H(+). The enzyme catalyses L-phenylalanyl-tRNA(Phe) + an N-terminal L-alpha-aminoacyl-[protein] = an N-terminal L-phenylalanyl-L-alpha-aminoacyl-[protein] + tRNA(Phe). In terms of biological role, functions in the N-end rule pathway of protein degradation where it conjugates Leu, Phe and, less efficiently, Met from aminoacyl-tRNAs to the N-termini of proteins containing an N-terminal arginine or lysine. The protein is Leucyl/phenylalanyl-tRNA--protein transferase of Shewanella sp. (strain MR-7).